The sequence spans 349 residues: Protein RecA (349 aa).

65 to 72 (GPESSGKT) contributes to the ATP binding site.

The protein belongs to the RecA family.

The protein localises to the cytoplasm. Its function is as follows. Can catalyze the hydrolysis of ATP in the presence of single-stranded DNA, the ATP-dependent uptake of single-stranded DNA by duplex DNA, and the ATP-dependent hybridization of homologous single-stranded DNAs. It interacts with LexA causing its activation and leading to its autocatalytic cleavage. In Vibrio vulnificus (strain CMCP6), this protein is Protein RecA.